The chain runs to 329 residues: DNA-directed RNA polymerase subunit alpha (329 aa).

The interval 1-235 (MQGFVEDFLK…QQLEAFVDLR (235 aa)) is alpha N-terminal domain (alpha-NTD). The interval 249–329 (FEPVLLRPVD…NWPPKSLLED (81 aa)) is alpha C-terminal domain (alpha-CTD).

Belongs to the RNA polymerase alpha chain family. Homodimer. The RNAP catalytic core consists of 2 alpha, 1 beta, 1 beta' and 1 omega subunit. When a sigma factor is associated with the core the holoenzyme is formed, which can initiate transcription.

The catalysed reaction is RNA(n) + a ribonucleoside 5'-triphosphate = RNA(n+1) + diphosphate. In terms of biological role, DNA-dependent RNA polymerase catalyzes the transcription of DNA into RNA using the four ribonucleoside triphosphates as substrates. The sequence is that of DNA-directed RNA polymerase subunit alpha from Buchnera aphidicola subsp. Cinara cedri (strain Cc).